The primary structure comprises 183 residues: ATP synthase subunit b, chloroplastic (183 aa).

The chain crosses the membrane as a helical span at residues 33–51 (IINLSVVIGVVVSFGGDAL).

It belongs to the ATPase B chain family. As to quaternary structure, F-type ATPases have 2 components, F(1) - the catalytic core - and F(0) - the membrane proton channel. F(1) has five subunits: alpha(3), beta(3), gamma(1), delta(1), epsilon(1). F(0) has four main subunits: a(1), b(1), b'(1) and c(10-14). The alpha and beta chains form an alternating ring which encloses part of the gamma chain. F(1) is attached to F(0) by a central stalk formed by the gamma and epsilon chains, while a peripheral stalk is formed by the delta, b and b' chains.

The protein localises to the plastid. It localises to the chloroplast thylakoid membrane. Its function is as follows. F(1)F(0) ATP synthase produces ATP from ADP in the presence of a proton or sodium gradient. F-type ATPases consist of two structural domains, F(1) containing the extramembraneous catalytic core and F(0) containing the membrane proton channel, linked together by a central stalk and a peripheral stalk. During catalysis, ATP synthesis in the catalytic domain of F(1) is coupled via a rotary mechanism of the central stalk subunits to proton translocation. In terms of biological role, component of the F(0) channel, it forms part of the peripheral stalk, linking F(1) to F(0). This chain is ATP synthase subunit b, chloroplastic, found in Oltmannsiellopsis viridis (Marine flagellate).